An 82-amino-acid polypeptide reads, in one-letter code: Conotoxin C11GB (82 aa).

The N-terminal stretch at 1 to 22 (MKLTCVMIVAVLFLTAWTVVTA) is a signal peptide. Residues 23 to 53 (EPHSSNVLENLYLKAHHEMENPEASKLNTRD) constitute a propeptide that is removed on maturation. Disulfide bonds link Cys-55/Cys-72, Cys-62/Cys-76, and Cys-71/Cys-80.

Belongs to the conotoxin O1 superfamily. As to expression, expressed by the venom duct.

The protein resides in the secreted. The sequence is that of Conotoxin C11GB from Conus vexillum (Flag cone).